A 490-amino-acid chain; its full sequence is MSEVTKNSLEKILPQLKCHFTWNLFKEESVSRDLEDRVCNQIEFLNTEFKATMYNLLAYIKHLDGNNEAALECLRQAEELIQQEHADQAEIRSLVTWGNYVWVYYHLGRLSDAQIYVDKVKQTCKKFSNPYSIEYSELDCEEGWTQLKCGRNERAKVCFEKALEEKPNNPEFSSGLAIAMYHLDNNPEKQFSTDVLKQAIELSPDNQYVKVLLGLKLQKMNKEAEGEQFVEEALEKAPCQTDVLRSAAKFYRRKGDLDKAIELFQRVLESTPNNGYLYHQIGCCYKAKVRQMQNTGESEASGNKEMIEALKQYAMDYSNKALEKGLNPLNAYSDCAEFLETECYQTPFNKEVPDAEKQQSHQRYCNLQKYNGKSEDTAVQHGLEGLSISKKSTDKEEIKDQPQNVSENLLPQNAPNYWYLQGLIHKQNGDLLQAAKCYEKELGRLLRDAPSGIGSIFLSASELEDGSEEMGQGAVSSSPRELLSNSEQLN.

6 TPR repeats span residues 51 to 84 (ATMY…IQQE), 94 to 127 (LVTW…CKKF), 136 to 169 (SELD…KPNN), 172 to 206 (FSSG…SPDN), 207 to 240 (QYVK…APCQ), and 241 to 274 (TDVL…TPNN). Ser-203 carries the phosphoserine modification. A disordered region spans residues 386–409 (LSISKKSTDKEEIKDQPQNVSENL). Residues 391–400 (KSTDKEEIKD) show a composition bias toward basic and acidic residues. TPR repeat units lie at residues 415-448 (PNYW…LLRD) and 450-481 (PSGI…SPRE). The tract at residues 467-490 (SEEMGQGAVSSSPRELLSNSEQLN) is disordered. Residues 474-490 (AVSSSPRELLSNSEQLN) are compositionally biased toward polar residues. Ser-478 bears the Phosphoserine mark.

It belongs to the IFIT family. Component of an interferon-dependent multiprotein complex, at least composed of IFIT1, IFIT2 and IFIT3. Interacts with IFIT1 and IFIT2. Interacts (via N-terminus) with MAVS, TBK1, TRAF6 and RIGI. Interacts with COPS5.

The protein localises to the cytoplasm. Its subcellular location is the mitochondrion. Functionally, IFN-induced antiviral protein which acts as an inhibitor of cellular as well as viral processes, cell migration, proliferation, signaling, and viral replication. Enhances MAVS-mediated host antiviral responses by serving as an adapter bridging TBK1 to MAVS which leads to the activation of TBK1 and phosphorylation of IRF3 and phosphorylated IRF3 translocates into nucleus to promote antiviral gene transcription. Exhibits an antiproliferative activity via the up-regulation of cell cycle negative regulators CDKN1A/p21 and CDKN1B/p27. Normally, CDKN1B/p27 turnover is regulated by COPS5, which binds CDKN1B/p27 in the nucleus and exports it to the cytoplasm for ubiquitin-dependent degradation. IFIT3 sequesters COPS5 in the cytoplasm, thereby increasing nuclear CDKN1B/p27 protein levels. Up-regulates CDKN1A/p21 by down-regulating MYC, a repressor of CDKN1A/p21. Can negatively regulate the apoptotic effects of IFIT2. This is Interferon-induced protein with tetratricopeptide repeats 3 (IFIT3) from Pan troglodytes (Chimpanzee).